A 262-amino-acid polypeptide reads, in one-letter code: Small ribosomal subunit protein uS2 (262 aa).

Positions 236–262 are disordered; sequence AGGAAEAPAAEDVQTEEAAAPEADSAE.

It belongs to the universal ribosomal protein uS2 family.

The protein is Small ribosomal subunit protein uS2 of Psychrobacter sp. (strain PRwf-1).